Consider the following 573-residue polypeptide: Sulfite reductase [NADPH] hemoprotein beta-component (573 aa).

4 residues coordinate [4Fe-4S] cluster: Cys-438, Cys-444, Cys-483, and Cys-487. Cys-487 contacts siroheme.

Belongs to the nitrite and sulfite reductase 4Fe-4S domain family. In terms of assembly, alpha(8)-beta(8). The alpha component is a flavoprotein, the beta component is a hemoprotein. Siroheme is required as a cofactor. The cofactor is [4Fe-4S] cluster.

It catalyses the reaction hydrogen sulfide + 3 NADP(+) + 3 H2O = sulfite + 3 NADPH + 4 H(+). The protein operates within sulfur metabolism; hydrogen sulfide biosynthesis; hydrogen sulfide from sulfite (NADPH route): step 1/1. Functionally, component of the sulfite reductase complex that catalyzes the 6-electron reduction of sulfite to sulfide. This is one of several activities required for the biosynthesis of L-cysteine from sulfate. This is Sulfite reductase [NADPH] hemoprotein beta-component from Nitrosomonas eutropha (strain DSM 101675 / C91 / Nm57).